Reading from the N-terminus, the 420-residue chain is Multiple sugar-binding protein (420 aa).

The signal sequence occupies residues 1-22 (MKWYKKIGLLGIVGLTSVLLAA). Cys23 carries N-palmitoyl cysteine lipidation. Cys23 is lipidated: S-diacylglycerol cysteine.

This sequence belongs to the bacterial solute-binding protein 1 family.

It localises to the cell membrane. Functionally, involved in a binding protein-dependent transport system responsible for the uptake of melibiose, raffinose and isomaltotriose. The protein is Multiple sugar-binding protein of Streptococcus mutans serotype c (strain ATCC 700610 / UA159).